We begin with the raw amino-acid sequence, 362 residues long: 3-dehydroquinate synthase (362 aa).

Residues 71 to 76 (DGEQYK), 105 to 109 (GVVGD), 129 to 130 (TT), lysine 142, lysine 151, and 169 to 172 (CLKT) each bind NAD(+). Zn(2+)-binding residues include glutamate 184, histidine 247, and histidine 264.

The protein belongs to the sugar phosphate cyclases superfamily. Dehydroquinate synthase family. Requires NAD(+) as cofactor. It depends on Co(2+) as a cofactor. Zn(2+) serves as cofactor.

The protein resides in the cytoplasm. The catalysed reaction is 7-phospho-2-dehydro-3-deoxy-D-arabino-heptonate = 3-dehydroquinate + phosphate. It participates in metabolic intermediate biosynthesis; chorismate biosynthesis; chorismate from D-erythrose 4-phosphate and phosphoenolpyruvate: step 2/7. Functionally, catalyzes the conversion of 3-deoxy-D-arabino-heptulosonate 7-phosphate (DAHP) to dehydroquinate (DHQ). This is 3-dehydroquinate synthase from Shigella flexneri.